A 186-amino-acid chain; its full sequence is Peptidyl-tRNA hydrolase (186 aa).

Tyr14 lines the tRNA pocket. Catalysis depends on His19, which acts as the Proton acceptor. Positions 64, 66, and 112 each coordinate tRNA.

It belongs to the PTH family. Monomer.

The protein resides in the cytoplasm. The enzyme catalyses an N-acyl-L-alpha-aminoacyl-tRNA + H2O = an N-acyl-L-amino acid + a tRNA + H(+). Hydrolyzes ribosome-free peptidyl-tRNAs (with 1 or more amino acids incorporated), which drop off the ribosome during protein synthesis, or as a result of ribosome stalling. Its function is as follows. Catalyzes the release of premature peptidyl moieties from peptidyl-tRNA molecules trapped in stalled 50S ribosomal subunits, and thus maintains levels of free tRNAs and 50S ribosomes. The chain is Peptidyl-tRNA hydrolase from Bacillus cereus (strain ATCC 10987 / NRS 248).